Reading from the N-terminus, the 311-residue chain is Arginine/serine-rich protein 1 (311 aa).

The segment at 1–125 is disordered; it reads MSTYVNDMWP…RSRSRSRGRS (125 aa). Ser-12 carries the post-translational modification Phosphoserine. Positions 20–31 are enriched in low complexity; it reads STSRSGGSSRLS. The segment covering 32 to 123 has biased composition (basic residues); the sequence is SRSRSRSFSR…RSRSRSRSRG (92 aa). A phosphoserine mark is found at Ser-109 and Ser-111. Arg-135 bears the Omega-N-methylarginine mark.

It belongs to the RSRP family. In terms of processing, phosphorylated. Phosphorylation at Ser-109 and Ser-111 mediates the interaction with spliceosome proteins.

The protein localises to the nucleus. Functionally, probably acts as a spliceosomal factor that contributes to spliceosome assembly and regulates the isoform switching of proteins such as PARP6. This is Arginine/serine-rich protein 1 (RSRP1) from Pongo abelii (Sumatran orangutan).